The sequence spans 229 residues: NAD(P)H-quinone oxidoreductase subunit K, chloroplastic (229 aa).

Positions 43, 44, 108, and 139 each coordinate [4Fe-4S] cluster.

The protein belongs to the complex I 20 kDa subunit family. As to quaternary structure, NDH is composed of at least 16 different subunits, 5 of which are encoded in the nucleus. Requires [4Fe-4S] cluster as cofactor.

The protein resides in the plastid. The protein localises to the chloroplast thylakoid membrane. The catalysed reaction is a plastoquinone + NADH + (n+1) H(+)(in) = a plastoquinol + NAD(+) + n H(+)(out). It catalyses the reaction a plastoquinone + NADPH + (n+1) H(+)(in) = a plastoquinol + NADP(+) + n H(+)(out). In terms of biological role, NDH shuttles electrons from NAD(P)H:plastoquinone, via FMN and iron-sulfur (Fe-S) centers, to quinones in the photosynthetic chain and possibly in a chloroplast respiratory chain. The immediate electron acceptor for the enzyme in this species is believed to be plastoquinone. Couples the redox reaction to proton translocation, and thus conserves the redox energy in a proton gradient. This Aethionema cordifolium (Lebanon stonecress) protein is NAD(P)H-quinone oxidoreductase subunit K, chloroplastic.